The chain runs to 404 residues: Ethanolamine-phosphate cytidylyltransferase (404 aa).

Positions 173–201 (YADSFGKPPHPTPAGDTLSSEVSSQCPGG) are disordered. The segment covering 189 to 201 (TLSSEVSSQCPGG) has biased composition (polar residues). CTP contacts are provided by residues 239-240 (AF), 247-250 (HVDF), Lys277, 325-328 (HGKT), and 354-358 (SGSDL). The residue at position 356 (Ser356) is a Phosphoserine. Thr359 and Thr360 each carry phosphothreonine.

This sequence belongs to the cytidylyltransferase family.

The enzyme catalyses phosphoethanolamine + CTP + H(+) = CDP-ethanolamine + diphosphate. The protein operates within phospholipid metabolism; phosphatidylethanolamine biosynthesis; phosphatidylethanolamine from ethanolamine: step 2/3. Ethanolamine-phosphate cytidylyltransferase that catalyzes the second step in the synthesis of phosphatidylethanolamine (PE) from ethanolamine via the CDP-ethanolamine pathway. Phosphatidylethanolamine is a dominant inner-leaflet phospholipid in cell membranes, where it plays a role in membrane function by structurally stabilizing membrane-anchored proteins, and participates in important cellular processes such as cell division, cell fusion, blood coagulation, and apoptosis. The sequence is that of Ethanolamine-phosphate cytidylyltransferase (Pcyt2) from Mus musculus (Mouse).